The chain runs to 73 residues: Large ribosomal subunit protein bL31 (73 aa).

Cysteine 16, cysteine 18, cysteine 36, and cysteine 39 together coordinate Zn(2+).

Belongs to the bacterial ribosomal protein bL31 family. Type A subfamily. As to quaternary structure, part of the 50S ribosomal subunit. Requires Zn(2+) as cofactor.

Binds the 23S rRNA. In Citrifermentans bemidjiense (strain ATCC BAA-1014 / DSM 16622 / JCM 12645 / Bem) (Geobacter bemidjiensis), this protein is Large ribosomal subunit protein bL31.